A 218-amino-acid polypeptide reads, in one-letter code: MSIGILGKKLGMSQFFDEQGRAVPVTLIEAGPCRITQLKNDDTDGYSAVQIGFGETREKLINKPAQGHLNKSGEGLLRHLREYRVDSVEGLELGGAITVGDFEAGQKVDVSGDTVGRGFAGYQKRHGFSRGPMTHGSKNHREPGSTGAGTTPGRIYPGKRMAGRYGGKKITTRGLTILKVDSEHNLLVVKGSVPGKPGALLNIRPALRVGAKPANGGK.

The segment at 124–162 (KRHGFSRGPMTHGSKNHREPGSTGAGTTPGRIYPGKRMA) is disordered.

Belongs to the universal ribosomal protein uL3 family. Part of the 50S ribosomal subunit. Forms a cluster with proteins L14 and L19.

One of the primary rRNA binding proteins, it binds directly near the 3'-end of the 23S rRNA, where it nucleates assembly of the 50S subunit. This Synechococcus sp. (strain CC9605) protein is Large ribosomal subunit protein uL3.